The following is a 200-amino-acid chain: Probable GTP-binding protein EngB (200 aa).

One can recognise an EngB-type G domain in the interval lysine 23 to glycine 197. GTP contacts are provided by residues glycine 31 to serine 38, glycine 58 to leucine 62, aspartate 83 to glycine 86, threonine 153 to aspartate 156, and phenylalanine 175 to alanine 177. Serine 38 and threonine 60 together coordinate Mg(2+).

It belongs to the TRAFAC class TrmE-Era-EngA-EngB-Septin-like GTPase superfamily. EngB GTPase family. The cofactor is Mg(2+).

In terms of biological role, necessary for normal cell division and for the maintenance of normal septation. The polypeptide is Probable GTP-binding protein EngB (Wolinella succinogenes (strain ATCC 29543 / DSM 1740 / CCUG 13145 / JCM 31913 / LMG 7466 / NCTC 11488 / FDC 602W) (Vibrio succinogenes)).